We begin with the raw amino-acid sequence, 221 residues long: Ribosomal RNA small subunit methyltransferase G 3 (221 aa).

Residues G85, F90, 136-137 (IE), and R150 contribute to the S-adenosyl-L-methionine site.

Belongs to the methyltransferase superfamily. RNA methyltransferase RsmG family.

It is found in the cytoplasm. It catalyses the reaction guanosine(527) in 16S rRNA + S-adenosyl-L-methionine = N(7)-methylguanosine(527) in 16S rRNA + S-adenosyl-L-homocysteine. Specifically methylates the N7 position of guanine in position 527 of 16S rRNA. This is Ribosomal RNA small subunit methyltransferase G 3 from Bdellovibrio bacteriovorus (strain ATCC 15356 / DSM 50701 / NCIMB 9529 / HD100).